The primary structure comprises 141 residues: MNYQKIYNDLISRAQAREPLSEYKETHHIIPRCMGGSDDKENLVELTAREHFIAHAILSKIYPVKSVIFAFFMMCNMKGTKKRHYKVHSKIYAHAKKLNSQFRKGTVISEETRLKMSKSENRSAFNRRNQTQNIGGNQRKG.

The tract at residues 115-141 (KMSKSENRSAFNRRNQTQNIGGNQRKG) is disordered. Residues 122 to 141 (RSAFNRRNQTQNIGGNQRKG) are compositionally biased toward polar residues.

This is Probable mobile endonuclease E (mobE) from Escherichia coli (Bacteriophage T4).